The chain runs to 123 residues: Ribosome-binding factor A (123 aa).

The protein belongs to the RbfA family. Monomer. Binds 30S ribosomal subunits, but not 50S ribosomal subunits or 70S ribosomes.

The protein resides in the cytoplasm. Functionally, one of several proteins that assist in the late maturation steps of the functional core of the 30S ribosomal subunit. Associates with free 30S ribosomal subunits (but not with 30S subunits that are part of 70S ribosomes or polysomes). Required for efficient processing of 16S rRNA. May interact with the 5'-terminal helix region of 16S rRNA. This is Ribosome-binding factor A from Neisseria gonorrhoeae (strain ATCC 700825 / FA 1090).